Here is a 129-residue protein sequence, read N- to C-terminus: Protein NrdI (129 aa).

It belongs to the NrdI family.

Its function is as follows. Probably involved in ribonucleotide reductase function. This chain is Protein NrdI, found in Macrococcus caseolyticus (strain JCSC5402) (Macrococcoides caseolyticum).